We begin with the raw amino-acid sequence, 2108 residues long: MGKERTKTVDRTRVTPVAVIGMGCRLPGGIDSPDRLWEALLRGDDLVTEIPADRWDIDEYYDPEPGVPGRTDCKWGAYLDNVGDFDPEFFGIGEKEAIAIDPQHRLLLETSWEAMEHGGLTPNQMASRTGVFVGLVHTDYILVHADNQTFEGPYGNTGTNACFASGRVAYAMGLQGPAITVDTACSSGLTAIHLACRSLHDGESDIALAGGVYVMLEPRRFASGSALGMLSATGRCHAFDVSADGFVSGEGCVMLALKRLPDALADGDRILAVIRGTAANQDGHTVNIATPSRSAQVAAYREALDVAGVDPATVGMVEAHGPGTPVGDPIEYASLAEVYGNDGPCALASVKTNFGHTQSAAGALGLMKAVLALQHGVVPQNLHFTALPDKLAAIETNLFVPQEITPWPGADQETPRRAAVSSYGMTGTNVHAIVEQAPVPAPESGAPGDTPATPGIDGALLFALSASSQDALRQTAARLADWVDAQGPELAPADLAYTLARRRGHRPVRTAVLAATTAELTEALREVATGEPPYPPAVGQDDRGPVWVFSGQGSQWAGMGADLLATEPVFAATIAAIEPLIAAESGFSVTEAMTAPEVVTGIDRVQPTLFAMQVALAATMKSYGVAPGAVIGHSLGESAAAVVAGALCLEDGVRVICRRSALMTRIAGAGAMASVELPAQQVLSELMARGVNDAVVAVVASPQSTVIGGATQTVRDLVAAWEQRDVLAREVAVDVASHSPQVDPILDELAEALAEISPLQPEIPYYSATSFDPREEPYCDAYYWVDNLRHTVRFAAAVQAALEDGYRVFTELTPHPLLTHAVDQTARSLDMSAAALAGMRREQPLPHGLRALAGDLYAAGAAVDFAVLYPTGRLINAPLPTWNHRRLLLDDTTRRIAHANTVAVHPLLGSHVRLPEEPERHVWQGEVGTVTQPWLADHQIHGAAALPGAAYCEMALAAARAVLGEASEVRDIRFEQMLLLDDETPIGVTATVEAPGVVPLTVETSHDGRYTRQLAAVLHVVREADDAPDQPPQKNIAELLASHPHKVDGAEVRQWLDKRGHRLGPAFAGLVDAYIAEGAGDTVLAEVNLPGPLRSQVKAYGVHPVLLDACFQSVAAHPAVQGMADGGLLLPLGVRRLRSYGSARHARYCCTTVTACGVGVEADLDVLDEHGAVVLAVRGLQLGTGASQASERARVLGERLLSIEWHERELPENSHAEPGAWLLISTCDATDLVAAQLTDALKVHDAQCTTMSWPQRADHAAQAARLRDQLGTGGFTGVFVLTAPQTGDPDAESPVRGGELVKHVVRIAREIPEITAQEPRLYVLTHNAQAVLSGDRPNLEQGGMRGLLRVIGAEHPHLKASYVDVDEQTGAESVARQLLAASGEDETAWRNDQWYTARLCPAPLRPEERQTTVVDHAEAGMRLQIRTPGDLQTLEFAAFDRVPPGPGEIEVAVTASSINFADVLVTFGRYQTLDGRQPQLGTDFAGVVSAVGPGVSELKVGDRVGGMSPNGCWATFVTCDARLATRLPEGLTDAQAAAVTTASATAWYGLQDLARIKAGDKVLIHSATGGVGQAAIAIARAAGAQIYATAGNEKRRDLLRDMGIEHVYDSRSVEFAEQIRRDTAGYGVDIVLNSVTGAAQLAGLKLLALGGRFIEIGKRDIYSNTRLELLPFRRNLAFYGLDLGLMSVSHPAAVRELLSTVYRLTVEGVLPMPQSTHYPLAEAATAIRVMGAAEHTGKLILDVPHAGRSSVVLPPEQARVFRSDGSYIITGGLGGLGLFLAEKMANAGAGRIVLSSRSQPSQKALETIELVRAIGSDVVVECGDIAQPDTADRLVTAATATGLPLRGVLHAAAVVEDATLANITDELIERDWAPKAYGAWQLHRATADQPLDWFCSFSSAAALVGSPGQGAYAAANSWLDTFTHWRRAQDLPATSIAWGAWGQIGRAIAFAEQTGDAIAPEEGAYAFETLLRHNRAYSGYAPVIGSPWLTAFAQHSPFAEKFQSLGQNRSGTSKFLAELVDLPREEWPDRLRRLLSKQVGLILRRTIDTDRLLSEYGLDSLSSQELRARVEAETGIRISATEINTTVRGLADLMCDKLAADRDAPAPA.

Residues 1–23 (MGKERTKTVDRTRVTPVAVIGMG) form the signal peptide. Cys24 carries N-palmitoyl cysteine lipidation. Residue Cys24 is the site of S-diacylglycerol cysteine attachment. The Ketosynthase family 3 (KS3) domain occupies 24-436 (CRLPGGIDSP…GTNVHAIVEQ (413 aa)). Residue Cys185 is the Acyl-thioester intermediate; for beta-ketoacyl synthase activity of the active site. Active-site for beta-ketoacyl synthase activity residues include His320 and His356. A linker domain (LD) region spans residues 438 to 542 (PVPAPESGAP…PYPPAVGQDD (105 aa)). The interval 543 to 842 (RGPVWVFSGQ…AAALAGMRRE (300 aa)) is acyltransferase (AT). Ser634 (acyl-ester intermediate; for acyltransferase activity) is an active-site residue. The interval 900-1184 (NTVAVHPLLG…LAVRGLQLGT (285 aa)) is dehydratase (DH). Positions 905-1025 (HPLLGSHVRL…AVLHVVREAD (121 aa)) are N-terminal hotdog fold. One can recognise a PKS/mFAS DH domain in the interval 905–1191 (HPLLGSHVRL…LGTGASQASE (287 aa)). The active-site Proton acceptor; for dehydratase activity is the His938. Positions 1044 to 1191 (PHKVDGAEVR…LGTGASQASE (148 aa)) are C-terminal hotdog fold. Residue Asp1108 is the Proton donor; for dehydratase activity of the active site. The interval 1220–1391 (AWLLISTCDA…SGEDETAWRN (172 aa)) is pseudo beta-ketoacyl reductase (PsiKR). Residues 1419 to 1743 (AGMRLQIRTP…EHTGKLILDV (325 aa)) form an enoylreductase (ER) region. Positions 1765 to 2004 (GSYIITGGLG…HSPFAEKFQS (240 aa)) are beta-ketoacyl reductase (KR). Residues 1773-1776 (LGGL), 1796-1799 (SRSQ), 1824-1825 (DI), and 1897-1898 (FS) each bind NADP(+). Residues 2025–2101 (EEWPDRLRRL…DLMCDKLAAD (77 aa)) enclose the Carrier domain. Ser2060 carries the O-(pantetheine 4'-phosphoryl)serine modification.

In terms of assembly, homodimer.

The protein resides in the cell membrane. It participates in lipid metabolism; fatty acid biosynthesis. Its function is as follows. Polyketide synthase likely involved in the biosynthesis of a polymethyl-branched fatty acid (PMB-FA) that might only be produced during host infection. Is required for the full virulence of M.tuberculosis during host infection. This is Mycocerosic acid synthase-like polyketide synthase from Mycobacterium tuberculosis (strain ATCC 25618 / H37Rv).